Here is a 120-residue protein sequence, read N- to C-terminus: Large ribosomal subunit protein uL18 (120 aa).

Belongs to the universal ribosomal protein uL18 family. As to quaternary structure, part of the 50S ribosomal subunit; part of the 5S rRNA/L5/L18/L25 subcomplex. Contacts the 5S and 23S rRNAs.

Functionally, this is one of the proteins that bind and probably mediate the attachment of the 5S RNA into the large ribosomal subunit, where it forms part of the central protuberance. The protein is Large ribosomal subunit protein uL18 of Chloroflexus aurantiacus (strain ATCC 29364 / DSM 637 / Y-400-fl).